The sequence spans 494 residues: MWSLDPSQKEVLRFAVSCRILTLMLQALFNIIIPDHHADAFSPPRLASSCSVDQLVEGLLGGLSRWDAEHFLFIAEHGYLYEHNFAFFPGFPLALLMGTELLRPLQGLLSQRSCLLVSVALLNFLFSVLAAVTLHDLGCLVLGCPRQAFYAAMLFCLSPANVFLAAGYSEALFAFLTFSAMGQLERGRSWASGLLFALATGVRSNGLVSVGFLLHAQCRGFFSSLVVLNPLKPLFKLMASLCLSVLTVSLPFALFQYYAYTQFCLPGSAHSVPEPLVQLAVDKGYRITGGNEPPWCSWGLPLVYSYIQDVYWNVGFLRYYELRQVPNFLLATPVAVLVVWAAWTYVTTHPWLCLTLGLRRSKDSKKTLEKPHPGFLSPKVFVYLVHAAGLLLFGSLCMHVQVLTRLLCSSTPVVYWFPAHLLQNQEPLLRSVDTVPEKLLEKNSPPGQKAPRNCIMKLLYNWRACSPVTRCILGYFLTYWLLGLLLHCNFLPWT.

Residues 1–13 (MWSLDPSQKEVLR) are Cytoplasmic-facing. Residues 14–34 (FAVSCRILTLMLQALFNIIIP) form a helical membrane-spanning segment. At 35-77 (DHHADAFSPPRLASSCSVDQLVEGLLGGLSRWDAEHFLFIAEH) the chain is on the lumenal side. A helical transmembrane segment spans residues 78–98 (GYLYEHNFAFFPGFPLALLMG). Over 99–113 (TELLRPLQGLLSQRS) the chain is Cytoplasmic. The chain crosses the membrane as a helical span at residues 114–134 (CLLVSVALLNFLFSVLAAVTL). The Lumenal segment spans residues 135-136 (HD). A helical transmembrane segment spans residues 137–157 (LGCLVLGCPRQAFYAAMLFCL). Residues 158-161 (SPAN) lie on the Cytoplasmic side of the membrane. Residues 162–182 (VFLAAGYSEALFAFLTFSAMG) traverse the membrane as a helical segment. Topologically, residues 183–192 (QLERGRSWAS) are lumenal. Residues 193–213 (GLLFALATGVRSNGLVSVGFL) form a helical membrane-spanning segment. The Cytoplasmic segment spans residues 214–234 (LHAQCRGFFSSLVVLNPLKPL). The helical transmembrane segment at 235-255 (FKLMASLCLSVLTVSLPFALF) threads the bilayer. At 256 to 327 (QYYAYTQFCL…RYYELRQVPN (72 aa)) the chain is on the lumenal side. The helical transmembrane segment at 328–348 (FLLATPVAVLVVWAAWTYVTT) threads the bilayer. Residues 349–379 (HPWLCLTLGLRRSKDSKKTLEKPHPGFLSPK) lie on the Cytoplasmic side of the membrane. Residues 380 to 400 (VFVYLVHAAGLLLFGSLCMHV) form a helical membrane-spanning segment. Residues 401–470 (QVLTRLLCSS…NWRACSPVTR (70 aa)) are Lumenal-facing. The helical transmembrane segment at 471-491 (CILGYFLTYWLLGLLLHCNFL) threads the bilayer. At 492-494 (PWT) the chain is on the cytoplasmic side.

Belongs to the PIGV family. In terms of processing, not N-glycosylated.

The protein resides in the endoplasmic reticulum membrane. It functions in the pathway glycolipid biosynthesis; glycosylphosphatidylinositol-anchor biosynthesis. Functionally, alpha-1,6-mannosyltransferase that catalyzes the transfer of the second mannose, via an alpha-1,6 bond, from a dolichol-phosphate-mannose (Dol-P-Man) to the alpha-D-Man-(1-&gt;4)-alpha-D-GlcN-(1-&gt;6)-(1-radyl,2-acyl-sn-glycero-3-phospho)-2-acyl-inositol intermediate to generate an alpha-D-Man-(1-&gt;6)-alpha-D-Man-(1-&gt;4)-alpha-D-GlcN-(1-&gt;6)-(1-radyl,2-acyl-sn-glycero-3-phospho)-2-acyl-inositol and participates in the seventh step of the glycosylphosphatidylinositol-anchor biosynthesis. Also transfers the second mannose on a 2-PEtn-alpha-D-Man-(1-&gt;4)-alpha-D-GlcN-(1-&gt;6)-(1-radyl,2-acyl-sn-glycero-3-phospho)-2-acyl-inositol. This is GPI alpha-1,6-mannosyltransferase 2 from Cricetulus griseus (Chinese hamster).